Reading from the N-terminus, the 253-residue chain is Aspartic acid-rich protein (253 aa).

The signal sequence occupies residues 1–22; that stretch reads MYLFIYIFFFFFFFFFFVIVQK. The segment at 211 to 253 is disordered; sequence DDFDEEFDDDDDDDDDDDDDDDDDDKDDDLDGDDDGNNDDNDD.

Belongs to the nucleosome assembly protein (NAP) family.

The protein is Aspartic acid-rich protein of Plasmodium falciparum (isolate fcm17 / Senegal).